We begin with the raw amino-acid sequence, 351 residues long: Riboflavin-binding protein RibY (351 aa).

Residues 1–19 (MMKLRVLTLGILIILLITA) form the signal peptide. The N-palmitoyl cysteine moiety is linked to residue Cys-20. A lipid anchor (S-diacylglycerol cysteine) is attached at Cys-20.

The protein belongs to the NMT1 family. The complex is likely composed of an ATP-binding protein, a transmembrane protein (RibX) and a solute-binding protein (RibY).

It is found in the cell membrane. In terms of biological role, part of an ABC transporter complex that transports riboflavin into the cell. Binds riboflavin. This Chloroflexus aurantiacus (strain ATCC 29366 / DSM 635 / J-10-fl) protein is Riboflavin-binding protein RibY.